The primary structure comprises 203 residues: LexA repressor (203 aa).

A DNA-binding region (H-T-H motif) is located at residues 28 to 47 (IREIGDEFGITAKGAYDHLK). Catalysis depends on for autocatalytic cleavage activity residues Ser127 and Lys164.

The protein belongs to the peptidase S24 family. In terms of assembly, homodimer.

The enzyme catalyses Hydrolysis of Ala-|-Gly bond in repressor LexA.. Represses a number of genes involved in the response to DNA damage (SOS response), including recA and lexA. In the presence of single-stranded DNA, RecA interacts with LexA causing an autocatalytic cleavage which disrupts the DNA-binding part of LexA, leading to derepression of the SOS regulon and eventually DNA repair. This Leptospira interrogans serogroup Icterohaemorrhagiae serovar copenhageni (strain Fiocruz L1-130) protein is LexA repressor.